Reading from the N-terminus, the 134-residue chain is 6,7-dimethyl-8-ribityllumazine synthase (134 aa).

Residues phenylalanine 12, 44–46 (VFD), and 68–70 (SVI) contribute to the 5-amino-6-(D-ribitylamino)uracil site. 73–74 (ET) is a (2S)-2-hydroxy-3-oxobutyl phosphate binding site. The active-site Proton donor is histidine 76. Leucine 101 is a 5-amino-6-(D-ribitylamino)uracil binding site. (2S)-2-hydroxy-3-oxobutyl phosphate is bound at residue arginine 116.

Belongs to the DMRL synthase family.

The enzyme catalyses (2S)-2-hydroxy-3-oxobutyl phosphate + 5-amino-6-(D-ribitylamino)uracil = 6,7-dimethyl-8-(1-D-ribityl)lumazine + phosphate + 2 H2O + H(+). The protein operates within cofactor biosynthesis; riboflavin biosynthesis; riboflavin from 2-hydroxy-3-oxobutyl phosphate and 5-amino-6-(D-ribitylamino)uracil: step 1/2. Its function is as follows. Catalyzes the formation of 6,7-dimethyl-8-ribityllumazine by condensation of 5-amino-6-(D-ribitylamino)uracil with 3,4-dihydroxy-2-butanone 4-phosphate. This is the penultimate step in the biosynthesis of riboflavin. This is 6,7-dimethyl-8-ribityllumazine synthase from Methanosarcina acetivorans (strain ATCC 35395 / DSM 2834 / JCM 12185 / C2A).